Reading from the N-terminus, the 343-residue chain is KRR1 small subunit processome component homolog (343 aa).

The 69-residue stretch at 125–193 (DIIKIGNLVH…VRDIVVETMN (69 aa)) folds into the KH domain. The span at 232–245 (NISKRKQPKVKKAK) shows a compositional bias: basic residues. The interval 232-343 (NISKRKQPKV…KLLKANKKKV (112 aa)) is disordered. Residues 270-302 (FLNKEQKQAKRQQERSAKQADAAKRQDERRNKD) are a coiled coil. Positions 271 to 302 (LNKEQKQAKRQQERSAKQADAAKRQDERRNKD) are enriched in basic and acidic residues. Basic residues predominate over residues 331-343 (LKAKLLKANKKKV).

Belongs to the KRR1 family. As to quaternary structure, monomer. Component of the ribosomal small subunit (SSU) processome.

The protein localises to the nucleus. It is found in the nucleolus. In terms of biological role, required for 40S ribosome biogenesis. Involved in nucleolar processing of pre-18S ribosomal RNA and ribosome assembly. Binds to RNA. Required for female germline development, cell viability during eye development and for survival of dividing cells and epithelial cells during early wing disk development. The sequence is that of KRR1 small subunit processome component homolog from Drosophila ananassae (Fruit fly).